Here is a 366-residue protein sequence, read N- to C-terminus: tRNA/tmRNA (uracil-C(5))-methyltransferase (366 aa).

Glutamine 190, tyrosine 218, asparagine 223, glutamate 239, and aspartate 299 together coordinate S-adenosyl-L-methionine. Catalysis depends on cysteine 324, which acts as the Nucleophile. Glutamate 358 (proton acceptor) is an active-site residue.

This sequence belongs to the class I-like SAM-binding methyltransferase superfamily. RNA M5U methyltransferase family. TrmA subfamily.

It carries out the reaction uridine(54) in tRNA + S-adenosyl-L-methionine = 5-methyluridine(54) in tRNA + S-adenosyl-L-homocysteine + H(+). The catalysed reaction is uridine(341) in tmRNA + S-adenosyl-L-methionine = 5-methyluridine(341) in tmRNA + S-adenosyl-L-homocysteine + H(+). Its function is as follows. Dual-specificity methyltransferase that catalyzes the formation of 5-methyluridine at position 54 (m5U54) in all tRNAs, and that of position 341 (m5U341) in tmRNA (transfer-mRNA). The sequence is that of tRNA/tmRNA (uracil-C(5))-methyltransferase from Shigella boydii serotype 18 (strain CDC 3083-94 / BS512).